The chain runs to 213 residues: Peroxynitrite isomerase 2 (213 aa).

Residues 58–64 carry the GXWXGXG motif; sequence GVWRGEG. Heme b is bound by residues Lys-176 and His-203.

It belongs to the nitrobindin family. As to quaternary structure, homodimer. Heme b serves as cofactor.

The catalysed reaction is peroxynitrite = nitrate. Its pathway is nitrogen metabolism. Heme-binding protein able to scavenge peroxynitrite and to protect free L-tyrosine against peroxynitrite-mediated nitration, by acting as a peroxynitrite isomerase that converts peroxynitrite to nitrate. Therefore, this protein likely plays a role in peroxynitrite sensing and in the detoxification of reactive nitrogen and oxygen species (RNS and ROS, respectively). Is able to bind nitric oxide (NO) in vitro, but may act as a sensor of peroxynitrite levels in vivo. This is Peroxynitrite isomerase 2 from Rhodococcus jostii (strain RHA1).